Consider the following 300-residue polypeptide: Ribosomal RNA small subunit methyltransferase H (300 aa).

Residues 33 to 35, aspartate 53, phenylalanine 78, aspartate 97, and glutamine 104 contribute to the S-adenosyl-L-methionine site; that span reads GGH.

The protein belongs to the methyltransferase superfamily. RsmH family.

It localises to the cytoplasm. It carries out the reaction cytidine(1402) in 16S rRNA + S-adenosyl-L-methionine = N(4)-methylcytidine(1402) in 16S rRNA + S-adenosyl-L-homocysteine + H(+). Functionally, specifically methylates the N4 position of cytidine in position 1402 (C1402) of 16S rRNA. This chain is Ribosomal RNA small subunit methyltransferase H, found in Karelsulcia muelleri (strain GWSS) (Sulcia muelleri).